A 439-amino-acid polypeptide reads, in one-letter code: Methylenetetrahydrofolate--tRNA-(uracil-5-)-methyltransferase TrmFO (439 aa).

G8–G13 contributes to the FAD binding site.

The protein belongs to the MnmG family. TrmFO subfamily. The cofactor is FAD.

The protein resides in the cytoplasm. It carries out the reaction uridine(54) in tRNA + (6R)-5,10-methylene-5,6,7,8-tetrahydrofolate + NADH + H(+) = 5-methyluridine(54) in tRNA + (6S)-5,6,7,8-tetrahydrofolate + NAD(+). The catalysed reaction is uridine(54) in tRNA + (6R)-5,10-methylene-5,6,7,8-tetrahydrofolate + NADPH + H(+) = 5-methyluridine(54) in tRNA + (6S)-5,6,7,8-tetrahydrofolate + NADP(+). Functionally, catalyzes the folate-dependent formation of 5-methyl-uridine at position 54 (M-5-U54) in all tRNAs. This Dictyoglomus turgidum (strain DSM 6724 / Z-1310) protein is Methylenetetrahydrofolate--tRNA-(uracil-5-)-methyltransferase TrmFO.